A 96-amino-acid polypeptide reads, in one-letter code: YcgL domain-containing protein VS_0884 (96 aa).

In terms of domain architecture, YcgL spans 1–84 (MLCSIYKSSK…PPVNELELHK (84 aa)).

The polypeptide is YcgL domain-containing protein VS_0884 (Vibrio atlanticus (strain LGP32) (Vibrio splendidus (strain Mel32))).